Reading from the N-terminus, the 431-residue chain is Glutamate-1-semialdehyde 2,1-aminomutase (431 aa).

K266 is subject to N6-(pyridoxal phosphate)lysine.

This sequence belongs to the class-III pyridoxal-phosphate-dependent aminotransferase family. HemL subfamily. In terms of assembly, homodimer. Pyridoxal 5'-phosphate is required as a cofactor.

The protein localises to the cytoplasm. The catalysed reaction is (S)-4-amino-5-oxopentanoate = 5-aminolevulinate. Its pathway is porphyrin-containing compound metabolism; protoporphyrin-IX biosynthesis; 5-aminolevulinate from L-glutamyl-tRNA(Glu): step 2/2. The chain is Glutamate-1-semialdehyde 2,1-aminomutase from Wolinella succinogenes (strain ATCC 29543 / DSM 1740 / CCUG 13145 / JCM 31913 / LMG 7466 / NCTC 11488 / FDC 602W) (Vibrio succinogenes).